The primary structure comprises 456 residues: Cerebellar degeneration-related protein 2 (456 aa).

3 coiled-coil regions span residues 38-142 (LLDR…SGRG), 178-268 (AEKI…NTIH), and 348-376 (SVLN…IDED).

This sequence belongs to the CDR2 family.

The polypeptide is Cerebellar degeneration-related protein 2 (CDR2) (Gallus gallus (Chicken)).